Here is a 1484-residue protein sequence, read N- to C-terminus: Ral GTPase-activating protein subunit beta (1484 aa).

Disordered regions lie at residues 355-437 and 699-728; these read PRSD…APRR and ENNLKSHSRTNSGISSASGGSTEPTTPDSE. The residue at position 359 (serine 359) is a Phosphoserine. 2 positions are modified to phosphothreonine: threonine 363 and threonine 379. Polar residues-rich tracts occupy residues 369-381, 392-428, and 701-725; these read SMPQSAAVNTTPP, NKATMKTSTVTTAHTSKVQHQASSTSPLSSPNQTSSE, and NLKSHSRTNSGISSASGGSTEPTTP. Phosphoserine is present on residues serine 421 and serine 710. Phosphothreonine is present on threonine 724. Residues 1138 to 1382 enclose the Rap-GAP domain; sequence IGYLDLLPCR…TTLEKEVPVI (245 aa). The residue at position 1275 (serine 1275) is a Phosphoserine. Residues 1297–1325 form a disordered region; it reads PNHTDSLNSSQRLSPSSRMKKLPQGRPVP. The segment covering 1302-1313 has biased composition (low complexity); that stretch reads SLNSSQRLSPSS.

In terms of assembly, component of the heterodimeric RalGAP1 complex with RALGAPA1 and of the heterodimeric RalGAP2 complex with RALGAPA2. Heterodimerization is required for activity. As to expression, abundantly expressed in testis, pancreas, lung, thymus, brown fat, and white fat. Expressed at lower levels in the brain.

Non-catalytic subunit of the heterodimeric RalGAP1 and RalGAP2 complexes which act as GTPase activators for the Ras-like small GTPases RALA and RALB. The protein is Ral GTPase-activating protein subunit beta (Ralgapb) of Mus musculus (Mouse).